The primary structure comprises 357 residues: Biotin synthase (357 aa).

Residues 41–268 (NEVQISRLLS…KSRVRLSAGR (228 aa)) enclose the Radical SAM core domain. Positions 56, 60, and 63 each coordinate [4Fe-4S] cluster. The [2Fe-2S] cluster site is built by Cys100, Cys131, Cys191, and Arg263.

The protein belongs to the radical SAM superfamily. Biotin synthase family. In terms of assembly, homodimer. Requires [4Fe-4S] cluster as cofactor. It depends on [2Fe-2S] cluster as a cofactor.

The catalysed reaction is (4R,5S)-dethiobiotin + (sulfur carrier)-SH + 2 reduced [2Fe-2S]-[ferredoxin] + 2 S-adenosyl-L-methionine = (sulfur carrier)-H + biotin + 2 5'-deoxyadenosine + 2 L-methionine + 2 oxidized [2Fe-2S]-[ferredoxin]. It participates in cofactor biosynthesis; biotin biosynthesis; biotin from 7,8-diaminononanoate: step 2/2. In terms of biological role, catalyzes the conversion of dethiobiotin (DTB) to biotin by the insertion of a sulfur atom into dethiobiotin via a radical-based mechanism. The protein is Biotin synthase of Shewanella denitrificans (strain OS217 / ATCC BAA-1090 / DSM 15013).